A 257-amino-acid polypeptide reads, in one-letter code: GTP cyclohydrolase 1 type 2 homolog (257 aa).

A divalent metal cation-binding residues include H65, D103, H221, and E224.

The protein belongs to the GTP cyclohydrolase I type 2/NIF3 family. As to quaternary structure, homohexamer.

In Lactococcus lactis subsp. lactis (strain IL1403) (Streptococcus lactis), this protein is GTP cyclohydrolase 1 type 2 homolog (ykiD).